Reading from the N-terminus, the 816-residue chain is H(+)/Cl(-) exchange transporter 5 (816 aa).

A disordered region spans residues 1–26 (MAMWQGAMDNRGFQQGSFSSFQNSSS). At 1–124 (MAMWQGAMDN…WALIHSVSDA (124 aa)) the chain is on the cytoplasmic side. Over residues 12 to 25 (GFQQGSFSSFQNSS) the composition is skewed to low complexity. 2 helical membrane-spanning segments follow: residues 125–162 (FSGW…ICTG) and 208–231 (VNYF…VKVF). The short motif at 237 to 241 (GSGIP) is the Selectivity filter part_1 element. Serine 238 is a chloride binding site. An intramembrane region (helical) is located at residues 240–247 (IPEIKTIL). 2 helical membrane passes run 256–275 (LGKW…VSSG) and 281–300 (EGPL…HCFN). The Selectivity filter part_2 signature appears at 279-283 (GKEGP). 2 intramembrane regions (helical) span residues 312-324 (VLSA…VSVA) and 328-336 (PIGGVLFSL). 5 helical membrane-spanning segments follow: residues 348 to 366 (LWRS…RSIN), 389 to 415 (LVPF…AWCR), 422 to 442 (LGKY…ILAF), 498 to 518 (MWQL…TFGM), and 523 to 542 (GLFI…LGVG). The Selectivity filter part_3 signature appears at 523–527 (GLFIP). Chloride is bound at residue phenylalanine 525. The segment at residues 570–584 (GLYAMVGAAACLGGV) is an intramembrane region (helical). Positions 585–587 (TRM) form an intramembrane region, note=Loop between two helices. The helical intramembrane region spans 588-599 (TVSLVVIMFELT). The segment at residues 600 to 604 (GGLEY) is an intramembrane region (note=Loop between two helices). Residues 605–622 (IVPLMAAAMTSKWVADAL) form a helical membrane-spanning segment. At 623 to 816 (GREGIYDAHI…NQDPDSILFN (194 aa)) the chain is on the cytoplasmic side. Tyrosine 628 is a chloride binding site. 2 consecutive CBS domains span residues 656–720 (MKPR…ARKK) and 752–812 (ILDL…DPDS). ATP-binding positions include threonine 666, 687-689 (YSG), and 794-797 (TKKD).

This sequence belongs to the chloride channel (TC 2.A.49) family. ClC-5/CLCN5 subfamily. Interacts with NEDD4 and NEDD4L. In terms of processing, ubiquitinated by NEDD4L in the presence of albumin; which promotes endocytosis and proteasomal degradation. In terms of tissue distribution, kidney. Moderately expressed in aortic vascular smooth muscle and endothelial cells, and at a slightly higher level in the coronary vascular smooth muscle.

The protein localises to the golgi apparatus membrane. Its subcellular location is the endosome membrane. It is found in the cell membrane. The catalysed reaction is 2 chloride(in) + H(+)(out) = 2 chloride(out) + H(+)(in). Functionally, proton-coupled chloride transporter. Functions as antiport system and exchanges chloride ions against protons. Important for normal acidification of the endosome lumen. May play an important role in renal tubular function. The CLC channel family contains both chloride channels and proton-coupled anion transporters that exchange chloride or another anion for protons. The absence of conserved gating glutamate residues is typical for family members that function as channels. This is H(+)/Cl(-) exchange transporter 5 from Homo sapiens (Human).